Consider the following 461-residue polypeptide: Zinc finger protein ZFP2 (461 aa).

13 C2H2-type zinc fingers span residues 102–124 (YECN…QRIH), 130–152 (YKCN…QRIH), 158–180 (YKCN…QRTH), 186–208 (YQCK…ERIH), 214–236 (YKCN…QRTH), 242–264 (YECN…QRSH), 270–292 (YECS…QRNH), 298–320 (YKCN…QRLH), 326–348 (FECN…RRIH), 354–376 (YECM…QVIH), 382–404 (YECN…QRIH), 410–432 (YECD…QRTH), and 438–460 (YQCN…QRTH).

Belongs to the krueppel C2H2-type zinc-finger protein family.

The protein localises to the nucleus. Its function is as follows. Probable transcription factor involved in neuronal differentiation and/or phenotypic maintenance. The protein is Zinc finger protein ZFP2 (ZFP2) of Homo sapiens (Human).